A 338-amino-acid polypeptide reads, in one-letter code: UDP-N-acetylenolpyruvoylglucosamine reductase (338 aa).

Residues 17 to 188 (IAARTDWWID…MYVDYRLRLR (172 aa)) form the FAD-binding PCMH-type domain. Arg-164 is an active-site residue. Ser-237 (proton donor) is an active-site residue. Glu-333 is a catalytic residue.

The protein belongs to the MurB family. FAD serves as cofactor.

It localises to the cytoplasm. The enzyme catalyses UDP-N-acetyl-alpha-D-muramate + NADP(+) = UDP-N-acetyl-3-O-(1-carboxyvinyl)-alpha-D-glucosamine + NADPH + H(+). Its pathway is cell wall biogenesis; peptidoglycan biosynthesis. Its function is as follows. Cell wall formation. The protein is UDP-N-acetylenolpyruvoylglucosamine reductase of Porphyromonas gingivalis (strain ATCC 33277 / DSM 20709 / CIP 103683 / JCM 12257 / NCTC 11834 / 2561).